A 60-amino-acid chain; its full sequence is UPF0434 protein KPN78578_09190 (60 aa).

The protein belongs to the UPF0434 family.

This Klebsiella pneumoniae subsp. pneumoniae (strain ATCC 700721 / MGH 78578) protein is UPF0434 protein KPN78578_09190.